The sequence spans 163 residues: Ribonuclease P protein subunit p25-like protein (163 aa).

Disordered regions lie at residues 1-24 and 126-163; these read MEQYRRAGSVELPASSPMPQLPPD and LDPSECGYQPPGAPPGLGSIPSPSCGPRPRRRARDTRS. A compositionally biased stretch (basic residues) spans 153-163; it reads RPRRRARDTRS.

Belongs to the histone-like Alba family.

It localises to the nucleus. May be a component of ribonuclease P or MRP. This Mus musculus (Mouse) protein is Ribonuclease P protein subunit p25-like protein (Rpp25l).